The chain runs to 4588 residues: Protocadherin Fat 1 (4588 aa).

A signal peptide spans 1 to 21 (MGRHLALLLLLLLLFQHFGDS). Residues 22–4181 (DGSQRLEQTP…STPWNIGLAE (4160 aa)) are Extracellular-facing. Cadherin domains lie at 35–149 (THLE…RPLF) and 150–257 (SPTS…APVI). N40 carries an N-linked (GlcNAc...) asparagine glycan. An N-linked (GlcNAc...) asparagine glycan is attached at N333. Cadherin domains are found at residues 368–463 (EKDV…PPEF), 464–569 (TQTA…TPLF), 570–673 (EKIN…VNLQ), 718–822 (STLP…PPEF), 823–927 (LQES…PPTF), 928–1034 (IPPN…PPVF), 1035–1139 (SSFV…APQT), 1140–1245 (SEPV…KPQF), 1246–1357 (LQKF…EPIS), 1359–1456 (EESF…RPQF), 1457–1562 (STSK…APWF), 1563–1667 (TASS…SPKF), 1668–1765 (TSKE…APVF), 1766–1879 (MQAE…PPVF), 1880–1979 (AKPL…HLKF), 1980–2081 (TQDV…APVF), 2082–2182 (VNLP…MPVF), 2183–2283 (EKPF…PPVF), 2284–2390 (AQQS…PPLF), 2391–2492 (EQQI…SPAF), 2493–2596 (LQNE…APQF), 2597–2703 (RATK…LPKF), 2704–2809 (SEPF…SPVF), 2810–2918 (ESSP…PPRF), 2919–3023 (TAEI…SPVC), 3024–3125 (EKTL…APEF), 3126–3230 (SADP…PPVF), 3231–3335 (EYRE…TPVF), 3336–3440 (SQDT…APVF), 3441–3545 (SRGN…PPAI), and 3546–3647 (LPLE…AIRF). Residues N660, N740, and N791 are each glycosylated (N-linked (GlcNAc...) asparagine). N998 carries N-linked (GlcNAc...) asparagine glycosylation. N-linked (GlcNAc...) asparagine glycans are attached at residues N1426 and N1551. N1748, N1864, N1902, N1940, and N1991 each carry an N-linked (GlcNAc...) asparagine glycan. 2 N-linked (GlcNAc...) asparagine glycosylation sites follow: N2325 and N2464. N-linked (GlcNAc...) asparagine glycans are attached at residues N3324, N3422, N3444, N3613, N3640, and N3716. The EGF-like 1 domain maps to 3790-3827 (VHHGCEDDPCPEGSECVSDPWEEKHTCVCPSGRFGQCP). Intrachain disulfides connect C3794-C3805, C3799-C3816, C3818-C3826, C3976-C4009, C4017-C4028, C4022-C4038, C4040-C4049, C4056-C4067, C4061-C4076, C4078-C4087, C4093-C4104, C4098-C4113, C4115-C4124, C4131-C4142, and C4136-C4151. The Laminin G-like domain occupies 3829–4009 (SSSMTLTGNS…EESVDVSPGC (181 aa)). EGF-like domains follow at residues 4013–4050 (ATEDCASNPCQNGGVCNPSPAGGYYCKCSALYIGTHCE), 4052–4088 (SVNPCSSKPCLYGGTCVVDNGGFVCQCRGLYTGQRCQ), and 4089–4125 (LSPYCKDEPCKNGGTCFDSLDGAVCQCDSGFRGERCQ). The EGF-like 5; calcium-binding domain occupies 4127-4163 (DIDECSGNPCLHGALCENTHGSYHCNCSHEYRGRHCE). An N-linked (GlcNAc...) asparagine glycan is attached at N4152. The cysteines at positions 4153 and 4162 are disulfide-linked. A helical transmembrane segment spans residues 4182 to 4202 (GIGIVVFVAGIFLLVVVFVLC). Over 4203-4588 (RKMISRKKKH…PLDSQQHTEV (386 aa)) the chain is Cytoplasmic. A Nuclear localization signal motif is present at residues 4204–4214 (KMISRKKKHQA). Disordered stretches follow at residues 4255-4275 (SYTPSIPSDSRNNLDRNSFEG), 4303-4327 (SVAPNLPPPPPSNSPSDSDSIQKPS), and 4343-4376 (LSKKPLEEKPSQPYSARESLSEVQSLSSFQSESC). Over residues 4256–4265 (YTPSIPSDSR) the composition is skewed to polar residues. Residues 4363-4374 (SEVQSLSSFQSE) are compositionally biased toward polar residues. The PTB-like motif motif lies at 4378-4382 (DNGYH). 2 disordered regions span residues 4435-4479 (FPPP…SSSR) and 4565-4588 (ESGDDGHFEEVTIPPLDSQQHTEV).

In terms of assembly, interacts (via the C-terminus 4300-4400 AA) with ATN1. Interacts with RERE. Post-translationally, undergoes proteolytic cleavage. The extracellular domain is cleaved off and the cytoplasmic domain (about 400 AA) shuttles to the nucleus. As to expression, expressed in many epithelial and some endothelial and smooth muscle cells.

The protein resides in the cell membrane. Its subcellular location is the nucleus. Plays an essential role for cellular polarization, directed cell migration and modulating cell-cell contact. This is Protocadherin Fat 1 (FAT1) from Homo sapiens (Human).